The chain runs to 264 residues: MQELKDTQSEADTRNISIDRVGVKGLRFPIQIQDKLNRIQSTVATVSLAVDLPEEFKGTHMSRFVEALHQHGPLLDVHTALAIPRELLRRLSARRSHVEMEFPFFRSKNAPVTGIEGLMDYVVRFEMEAEANNKLADFKLTVIVPVTTLCPCSKAMSAYGAHNQRGLVTYSVRFASRPVWIEDLIDLVESCASCSLFSVLKRPDEKWVTEKAYENPVFVEDLVRNVALKTQSHSAFSWYRVEAENFESIHNHQAYAVIERDLRS.

The protein belongs to the GTP cyclohydrolase IV family.

It catalyses the reaction GTP + H2O = 7,8-dihydroneopterin 3'-triphosphate + formate + H(+). Its pathway is cofactor biosynthesis; 7,8-dihydroneopterin triphosphate biosynthesis; 7,8-dihydroneopterin triphosphate from GTP: step 1/1. Functionally, converts GTP to 7,8-dihydroneopterin triphosphate. This chain is GTP cyclohydrolase FolE2, found in Akkermansia muciniphila (strain ATCC BAA-835 / DSM 22959 / JCM 33894 / BCRC 81048 / CCUG 64013 / CIP 107961 / Muc).